The following is a 354-amino-acid chain: Arginase (354 aa).

Histidine 136, aspartate 159, histidine 161, and aspartate 163 together coordinate Mn(2+). Residues asparagine 165, serine 172, and aspartate 217 each coordinate L-arginine. Aspartate 266 and aspartate 268 together coordinate Mn(2+).

Belongs to the arginase family. As to quaternary structure, homotrimer; oligomerization is dependent on Mn(2+) binding. Requires Mn(2+) as cofactor.

The enzyme catalyses L-arginine + H2O = urea + L-ornithine. It participates in nitrogen metabolism; urea cycle; L-ornithine and urea from L-arginine: step 1/1. Catalyzes the hydrolysis of L-arginine into urea and L-ornithine, which is a precursor for polyamine biosynthesis. May play a role in parasite intra-hepatic development during the host liver stage. The protein is Arginase of Plasmodium berghei (strain Anka).